The sequence spans 175 residues: Major MR/P fimbria protein (175 aa).

An N-terminal signal peptide occupies residues Met1–Ala23. Cys42 and Cys81 are joined by a disulfide.

The protein belongs to the fimbrial protein family.

The protein resides in the fimbrium. Functionally, major structural component of mannose-resistant/proteus-like fimbriae of P.mirabilis. The protein is Major MR/P fimbria protein (mrpA) of Proteus mirabilis (strain HI4320).